We begin with the raw amino-acid sequence, 127 residues long: Aspartate 1-decarboxylase (127 aa).

Serine 25 functions as the Schiff-base intermediate with substrate; via pyruvic acid in the catalytic mechanism. A Pyruvic acid (Ser) modification is found at serine 25. Threonine 57 serves as a coordination point for substrate. The active-site Proton donor is tyrosine 58. Substrate is bound at residue 73–75 (GAA).

It belongs to the PanD family. Heterooctamer of four alpha and four beta subunits. Requires pyruvate as cofactor. Post-translationally, is synthesized initially as an inactive proenzyme, which is activated by self-cleavage at a specific serine bond to produce a beta-subunit with a hydroxyl group at its C-terminus and an alpha-subunit with a pyruvoyl group at its N-terminus.

It is found in the cytoplasm. It carries out the reaction L-aspartate + H(+) = beta-alanine + CO2. Its pathway is cofactor biosynthesis; (R)-pantothenate biosynthesis; beta-alanine from L-aspartate: step 1/1. Catalyzes the pyruvoyl-dependent decarboxylation of aspartate to produce beta-alanine. The protein is Aspartate 1-decarboxylase of Anoxybacillus flavithermus (strain DSM 21510 / WK1).